The sequence spans 216 residues: Elongation factor Ts (216 aa).

The involved in Mg(2+) ion dislocation from EF-Tu stretch occupies residues 80 to 83 (TDFV).

It belongs to the EF-Ts family.

Its subcellular location is the cytoplasm. Functionally, associates with the EF-Tu.GDP complex and induces the exchange of GDP to GTP. It remains bound to the aminoacyl-tRNA.EF-Tu.GTP complex up to the GTP hydrolysis stage on the ribosome. In Alkaliphilus oremlandii (strain OhILAs) (Clostridium oremlandii (strain OhILAs)), this protein is Elongation factor Ts.